Reading from the N-terminus, the 362-residue chain is Protein-arginine kinase (362 aa).

The Phosphagen kinase C-terminal domain maps to 24–255; the sequence is IVLSSRIRLA…QQLIAQERMA (232 aa). ATP is bound by residues 27–31, His92, Arg126, 177–181, and 208–213; these read SSRIR, RASVM, and RGTYGE. The RDXXRA motif of the pArg binding pocket involved in allosteric regulation signature appears at 338–343; sequence RDVRRA.

This sequence belongs to the ATP:guanido phosphotransferase family.

It catalyses the reaction L-arginyl-[protein] + ATP = N(omega)-phospho-L-arginyl-[protein] + ADP + H(+). Appears to be allosterically activated by the binding of pArg-containing polypeptides to the pArg-binding pocket localized in the C-terminal domain of McsB. Its function is as follows. Catalyzes the specific phosphorylation of arginine residues in a large number of proteins. Is part of the bacterial stress response system. Protein arginine phosphorylation has a physiologically important role and is involved in the regulation of many critical cellular processes, such as protein homeostasis, motility, competence, and stringent and stress responses, by regulating gene expression and protein activity. This Geobacillus sp. (strain WCH70) protein is Protein-arginine kinase.